Consider the following 152-residue polypeptide: Deoxyuridine 5'-triphosphate nucleotidohydrolase (152 aa).

Residues 71 to 73 (RSG), asparagine 84, 88 to 90 (LID), and methionine 98 each bind substrate.

This sequence belongs to the dUTPase family. Mg(2+) serves as cofactor.

It catalyses the reaction dUTP + H2O = dUMP + diphosphate + H(+). It functions in the pathway pyrimidine metabolism; dUMP biosynthesis; dUMP from dCTP (dUTP route): step 2/2. Functionally, this enzyme is involved in nucleotide metabolism: it produces dUMP, the immediate precursor of thymidine nucleotides and it decreases the intracellular concentration of dUTP so that uracil cannot be incorporated into DNA. This chain is Deoxyuridine 5'-triphosphate nucleotidohydrolase, found in Hahella chejuensis (strain KCTC 2396).